Reading from the N-terminus, the 92-residue chain is Large ribosomal subunit protein uL23 (92 aa).

It belongs to the universal ribosomal protein uL23 family. In terms of assembly, part of the 50S ribosomal subunit. Contacts protein L29, and trigger factor when it is bound to the ribosome.

Functionally, one of the early assembly proteins it binds 23S rRNA. One of the proteins that surrounds the polypeptide exit tunnel on the outside of the ribosome. Forms the main docking site for trigger factor binding to the ribosome. The sequence is that of Large ribosomal subunit protein uL23 from Bdellovibrio bacteriovorus (strain ATCC 15356 / DSM 50701 / NCIMB 9529 / HD100).